The chain runs to 79 residues: Acyl carrier protein (79 aa).

In terms of domain architecture, Carrier spans 1–76 (MSLEDDVIAI…DVFTYIKKRQ (76 aa)). S36 bears the O-(pantetheine 4'-phosphoryl)serine mark.

It belongs to the acyl carrier protein (ACP) family. 4'-phosphopantetheine is transferred from CoA to a specific serine of apo-ACP by AcpS. This modification is essential for activity because fatty acids are bound in thioester linkage to the sulfhydryl of the prosthetic group.

It localises to the cytoplasm. Its pathway is lipid metabolism; fatty acid biosynthesis. Functionally, carrier of the growing fatty acid chain in fatty acid biosynthesis. This chain is Acyl carrier protein, found in Chlamydia pneumoniae (Chlamydophila pneumoniae).